A 1798-amino-acid chain; its full sequence is Laminin subunit beta-2 (1798 aa).

The first 32 residues, 1–32, serve as a signal peptide directing secretion; it reads MELTSRERGRGQPLPWELRLGLLLSVLAATLA. Residues 43 to 282 form the Laminin N-terminal domain; the sequence is SRGSCYPATG…ALYELVVRGN (240 aa). Asparagine 248 is a glycosylation site (N-linked (GlcNAc...) asparagine). Intrachain disulfides connect cysteine 283–cysteine 292, cysteine 285–cysteine 310, cysteine 312–cysteine 321, cysteine 324–cysteine 344, cysteine 347–cysteine 356, cysteine 349–cysteine 374, cysteine 377–cysteine 386, cysteine 389–cysteine 407, cysteine 410–cysteine 423, cysteine 412–cysteine 438, cysteine 440–cysteine 449, cysteine 452–cysteine 467, cysteine 470–cysteine 484, cysteine 472–cysteine 491, cysteine 493–cysteine 502, cysteine 505–cysteine 519, cysteine 522–cysteine 534, cysteine 524–cysteine 541, and cysteine 543–cysteine 552. Laminin EGF-like domains lie at 283-346, 347-409, 410-469, and 470-521; these read CFCY…ACRK, CECH…VCRS, CDCD…GCRR, and CQCN…GCRP. A glycan (N-linked (GlcNAc...) asparagine) is linked at asparagine 368. In terms of domain architecture, Laminin EGF-like 5; truncated spans 522–552; it reads CDCDVGGALDPQCDEGTGQCHCRQHMVGRRC. Positions 561–777 constitute a Laminin IV type B domain; the sequence is RPFLDHLIWE…LLISLSTLIY (217 aa). Cystine bridges form between cysteine 783–cysteine 795, cysteine 785–cysteine 802, cysteine 804–cysteine 813, cysteine 816–cysteine 828, cysteine 831–cysteine 843, cysteine 833–cysteine 850, cysteine 852–cysteine 861, cysteine 864–cysteine 874, cysteine 877–cysteine 886, cysteine 879–cysteine 893, cysteine 896–cysteine 905, cysteine 908–cysteine 924, cysteine 927–cysteine 943, cysteine 929–cysteine 954, cysteine 956–cysteine 965, cysteine 968–cysteine 983, cysteine 986–cysteine 1000, cysteine 988–cysteine 1007, cysteine 1010–cysteine 1019, cysteine 1022–cysteine 1035, cysteine 1038–cysteine 1058, cysteine 1040–cysteine 1065, cysteine 1067–cysteine 1076, cysteine 1079–cysteine 1092, cysteine 1095–cysteine 1107, cysteine 1097–cysteine 1114, cysteine 1116–cysteine 1125, cysteine 1128–cysteine 1140, cysteine 1143–cysteine 1155, cysteine 1145–cysteine 1162, cysteine 1164–cysteine 1173, and cysteine 1176–cysteine 1187. 8 consecutive Laminin EGF-like domains span residues 783–830, 831–876, 877–926, 927–985, 986–1037, 1038–1094, 1095–1142, and 1143–1189; these read CQCN…GCQA, CQCS…SCRP, CVCN…QCRP, CPCP…RCQL, CECS…SCHR, CTCN…GCQP, CACH…QCHA, and CDCD…ACHP. Asparagine 1085 carries an N-linked (GlcNAc...) asparagine glycan. Positions 1190–1409 are domain II; sequence CHACFGDWDR…LSLTDINELV (220 aa). Residues asparagine 1249, asparagine 1308, and asparagine 1348 are each glycosylated (N-linked (GlcNAc...) asparagine). Residues 1253-1319 are a coiled coil; sequence ASTAQLVEAT…TLRQLDQHLD (67 aa). The interval 1338–1364 is disordered; that stretch reads SQSAEAERRANTSALAVPSPVSNSASA. Positions 1350–1363 are enriched in low complexity; sequence SALAVPSPVSNSAS. The domain alpha stretch occupies residues 1410-1442; sequence CGAPGDAPCATSPCGGAGCRDEDGQPRCGGLSC. Positions 1443–1798 are domain I; it reads NGAAATADLA…LQVQIYNTCQ (356 aa). Positions 1472 to 1526 form a coiled coil; the sequence is SILSRVAETRRQASEAQQRAQAALDKANASRGQVEQANQELQELIQSVKDFLNQE. An N-linked (GlcNAc...) asparagine glycan is attached at asparagine 1499. Serine 1532 carries the post-translational modification Phosphoserine; by FAM20C. Positions 1577-1790 form a coiled coil; sequence VGDVRRAEQL…RSVLQAINLQ (214 aa).

As to quaternary structure, laminin is a complex glycoprotein, consisting of three different polypeptide chains (alpha, beta, gamma), which are bound to each other by disulfide bonds into a cross-shaped molecule comprising one long and three short arms with globules at each end. Beta-2 is a subunit of laminin-3 (laminin-121 or S-laminin), laminin-4 (laminin-221 or S-merosin), laminin-7 (laminin-321 or KS-laminin), laminin-9 (laminin-421), laminin-11 (laminin-521), laminin-14 (laminin-423) and laminin-15 (laminin-523).

Its subcellular location is the secreted. The protein localises to the extracellular space. The protein resides in the extracellular matrix. It localises to the basement membrane. Functionally, binding to cells via a high affinity receptor, laminin is thought to mediate the attachment, migration and organization of cells into tissues during embryonic development by interacting with other extracellular matrix components. The sequence is that of Laminin subunit beta-2 (LAMB2) from Homo sapiens (Human).